The primary structure comprises 332 residues: 2,3-diketo-L-gulonate reductase (332 aa).

The active-site Proton donor is the H44. Residues 168 to 174, 224 to 225, and 304 to 306 contribute to the NAD(+) site; these read ITMVDMS, WK, and GHE.

It belongs to the LDH2/MDH2 oxidoreductase family. DlgD subfamily. Homodimer.

It is found in the cytoplasm. The catalysed reaction is 3-dehydro-L-gulonate + NAD(+) = 2,3-dioxo-L-gulonate + NADH + H(+). It catalyses the reaction 3-dehydro-L-gulonate + NADP(+) = 2,3-dioxo-L-gulonate + NADPH + H(+). In terms of biological role, catalyzes the reduction of 2,3-diketo-L-gulonate in the presence of NADH, to form 3-keto-L-gulonate. The chain is 2,3-diketo-L-gulonate reductase from Klebsiella pneumoniae (strain 342).